The chain runs to 474 residues: Adenosylhomocysteinase (474 aa).

T61, D136, and E196 together coordinate substrate. T197 to T199 contacts NAD(+). Substrate contacts are provided by K226 and D230. NAD(+)-binding positions include N231, G260–G265, E283, N318, I339–H341, and N384.

This sequence belongs to the adenosylhomocysteinase family. NAD(+) serves as cofactor.

Its subcellular location is the cytoplasm. It catalyses the reaction S-adenosyl-L-homocysteine + H2O = L-homocysteine + adenosine. Its pathway is amino-acid biosynthesis; L-homocysteine biosynthesis; L-homocysteine from S-adenosyl-L-homocysteine: step 1/1. May play a key role in the regulation of the intracellular concentration of adenosylhomocysteine. This chain is Adenosylhomocysteinase, found in Ralstonia pickettii (strain 12J).